The primary structure comprises 294 residues: Cuticle collagen 144 (294 aa).

An N-terminal signal peptide occupies residues 1 to 30 (MEKILVTISTGAASFAVLAVLFTIPSLYNT). Pro residues predominate over residues 100 to 112 (TCPPGPPGPPGQP). 2 disordered regions span residues 100–134 (TCPPGPPGPPGQPGQPGTPGAPGPKGEDNTSTYAP) and 148–278 (PQGP…GNDA). Triple-helical region stretches follow at residues 102 to 127 (PPGPPGPPGQPGQPGTPGAPGPKGED) and 153 to 274 (GPEG…PGLP). Composition is skewed to low complexity over residues 164–209 (AGPD…PGQD) and 219–265 (APGA…DGQP).

In terms of assembly, collagen polypeptide chains are complexed within the cuticle by disulfide bonds and other types of covalent cross-links.

In terms of biological role, nematode cuticles are composed largely of collagen-like proteins. The cuticle functions both as an exoskeleton and as a barrier to protect the worm from its environment. The protein is Cuticle collagen 144 of Caenorhabditis briggsae.